Consider the following 535-residue polypeptide: Phosphoenolpyruvate carboxykinase (ATP) (535 aa).

Residues Arg59, Tyr201, and Lys207 each coordinate substrate. Residues Lys207, His226, and 243-251 (GLSGTGKTT) contribute to the ATP site. Residues Lys207 and His226 each coordinate Mn(2+). Asp264 provides a ligand contact to Mn(2+). ATP contacts are provided by residues Glu292, Arg328, 444 to 445 (RI), and Thr450. Arg328 is a binding site for substrate.

This sequence belongs to the phosphoenolpyruvate carboxykinase (ATP) family. Requires Mn(2+) as cofactor.

Its subcellular location is the cytoplasm. The catalysed reaction is oxaloacetate + ATP = phosphoenolpyruvate + ADP + CO2. It participates in carbohydrate biosynthesis; gluconeogenesis. Involved in the gluconeogenesis. Catalyzes the conversion of oxaloacetate (OAA) to phosphoenolpyruvate (PEP) through direct phosphoryl transfer between the nucleoside triphosphate and OAA. The polypeptide is Phosphoenolpyruvate carboxykinase (ATP) (Parabacteroides distasonis (strain ATCC 8503 / DSM 20701 / CIP 104284 / JCM 5825 / NCTC 11152)).